The chain runs to 343 residues: LRP2-binding protein (343 aa).

One copy of the TPR repeat lies at 58 to 91 (SQATFLLGQLHYVQGCYAEAELIFDRIKDKDPQA). Sel1-like repeat units lie at residues 92–124 (LYQLAVIYYDGLGTKEDLGRAVEYMGRVAFWDS), 132–167 (YAALYNLGQAYLEGFGVQASSSEAERLWLLAADNGN), 172–205 (VKAQSALGMFYSRPESLDLRKAFFWHSQACGNGS), 206–241 (LESQAALGLMYLYGHGVQRDSDSALFCLKEAAERGS), 242–273 (VYAQGHLTACYYRRQLYSRAAALGQRVCEYKD), and 293–328 (AIGMFYYARCLHLGRGVPQNRDKAKHYCTQAVRIDP).

The protein localises to the cytoplasm. May act as an adapter that regulates LRP2 function. This is LRP2-binding protein (lrp2bp) from Danio rerio (Zebrafish).